Consider the following 474-residue polypeptide: TOM1-like protein 1 (474 aa).

The VHS domain maps to 22–154; the sequence is ATFAGVLTED…DLLKKGVQFP (133 aa). The interval 153–180 is disordered; sequence FPPSDGEPETRQEAGQISPNRPTSVPTA. The span at 165–178 shows a compositional bias: polar residues; it reads EAGQISPNRPTSVP. Phosphoserine is present on S170. The region spanning 199–287 is the GAT domain; sequence EQIGKLHSEL…AVLGYERFTR (89 aa). The interval 291–317 is disordered; that stretch reads RLLEQKRNRTEATRTSSEPSAPSCDLL. Residues 293–302 are compositionally biased toward basic and acidic residues; that stretch reads LEQKRNRTEA. Phosphoserine occurs at positions 313 and 320. Residues 392–395 are interaction with GRB2; sequence YDNF. The short motif at 420-424 is the SH3-binding element; it reads LPPLP. Residues 441–444 form an interaction with PIK3R1 region; it reads YEVM. Y457 bears the Phosphotyrosine mark. Residues 457-460 carry the SH2-binding motif; that stretch reads YEEI.

Belongs to the TOM1 family. In terms of assembly, interacts with LYN. Interacts with the SH2 and SH3 domains of FYN when phosphorylated. Also interacts with GRB2 and PIK3R1 when phosphorylated. Phosphorylated on tyrosines by LYN. Phosphorylated on tyrosines by FYN. Strongly expressed in brain and kidney, expressed at intermediate levels skin and heart, and weakly expressed in thymus. Not expressed in liver and spleen.

The protein resides in the golgi apparatus. Its subcellular location is the golgi stack. The protein localises to the endosome membrane. It localises to the cytoplasm. It is found in the membrane. Probable adapter protein involved in signaling pathways. Interacts with the SH2 and SH3 domains of various signaling proteins when it is phosphorylated. May promote FYN activation, possibly by disrupting intramolecular SH3-dependent interactions. The sequence is that of TOM1-like protein 1 (Tom1l1) from Mus musculus (Mouse).